A 313-amino-acid chain; its full sequence is Ribosomal RNA small subunit methyltransferase H (313 aa).

S-adenosyl-L-methionine is bound by residues 35–37 (GGH), aspartate 55, phenylalanine 79, aspartate 101, and glutamine 108.

This sequence belongs to the methyltransferase superfamily. RsmH family.

Its subcellular location is the cytoplasm. It catalyses the reaction cytidine(1402) in 16S rRNA + S-adenosyl-L-methionine = N(4)-methylcytidine(1402) in 16S rRNA + S-adenosyl-L-homocysteine + H(+). Functionally, specifically methylates the N4 position of cytidine in position 1402 (C1402) of 16S rRNA. The polypeptide is Ribosomal RNA small subunit methyltransferase H (Klebsiella pneumoniae subsp. pneumoniae (strain ATCC 700721 / MGH 78578)).